We begin with the raw amino-acid sequence, 115 residues long: 5-hydroxyisourate hydrolase (115 aa).

The segment at 1–23 (MSGLTTHILDQASGKPAAGVGVR) is disordered. Residues His-7, Arg-45, and Tyr-112 each coordinate substrate.

This sequence belongs to the transthyretin family. 5-hydroxyisourate hydrolase subfamily. Homotetramer.

The catalysed reaction is 5-hydroxyisourate + H2O = 5-hydroxy-2-oxo-4-ureido-2,5-dihydro-1H-imidazole-5-carboxylate + H(+). In terms of biological role, catalyzes the hydrolysis of 5-hydroxyisourate (HIU) to 2-oxo-4-hydroxy-4-carboxy-5-ureidoimidazoline (OHCU). The sequence is that of 5-hydroxyisourate hydrolase from Caulobacter vibrioides (strain ATCC 19089 / CIP 103742 / CB 15) (Caulobacter crescentus).